The sequence spans 375 residues: Actin (375 aa).

The protein belongs to the actin family.

It is found in the cytoplasm. It localises to the cytoskeleton. The catalysed reaction is ATP + H2O = ADP + phosphate + H(+). Functionally, actins are highly conserved proteins that are involved in various types of cell motility and are ubiquitously expressed in all eukaryotic cells. The chain is Actin from Sterkiella cavicola (Ciliate).